The sequence spans 74 residues: U-actitoxin-Bgr3a (74 aa).

Residues 1-21 (MSAQRFLFLLVVTSLIAASLA) form the signal peptide. The propeptide occupies 22–29 (APKDVQLT). Cystine bridges form between C35-C68, C37-C61, and C51-C69.

The protein belongs to the sea anemone type 3 (BDS) potassium channel toxin family.

The protein resides in the secreted. Its subcellular location is the nematocyst. Potently and selectively inhibits voltage-gated potassium channels Kv11/KCNH/ERG. Acts as a gating-modifier toxin that shifts the voltage-dependence of ERG activation in the positive direction and suppresses its current amplitudes elicited by strong depolarizing pulses that maximally activate the channels. This chain is U-actitoxin-Bgr3a, found in Bunodosoma granuliferum (Red warty sea anemone).